A 593-amino-acid polypeptide reads, in one-letter code: UvrABC system protein C (593 aa).

The 78-residue stretch at 14–91 (DSPGCYLHKD…IQENMPKYNI (78 aa)) folds into the GIY-YIG domain. Residues 196–231 (NKIVNGLTEKMKSAAMTMEFERAAEYRDLIEAISLL) enclose the UVR domain.

Belongs to the UvrC family. In terms of assembly, interacts with UvrB in an incision complex.

The protein resides in the cytoplasm. In terms of biological role, the UvrABC repair system catalyzes the recognition and processing of DNA lesions. UvrC both incises the 5' and 3' sides of the lesion. The N-terminal half is responsible for the 3' incision and the C-terminal half is responsible for the 5' incision. The sequence is that of UvrABC system protein C from Streptococcus agalactiae serotype III (strain NEM316).